A 344-amino-acid chain; its full sequence is MGGLMKKNTVILGIESSCDETAASVVKNGNEIISSVVASQIESHKRFGGVVPEIASRHHVEQITLVIEEALTQANVTMDDLDGIAVTEGPGLVGALLIGVNAAKTLAFMHNLPLIGVHHIAGHIYANRFETEFKFPLLSLVVSGGHTELVLMKADNDFEIIGETRDDAAGEAYDKVARTLGLAYPGGVQIDKLAKEGEDTFHFPRAMMDDGSFDFSFSGLKSSFINTLHNLRQRGEEPNPNDMAASFQASVVDVLVSKTIRAAKKYDVKQLLLAGGVAANQGLRKRLIQEMKLELPDIELIIPPLSLCGDNAAMIAAAGTVSFLQGKRSSYDMNANPGLLLEDI.

Fe cation-binding residues include H119 and H123. Residues 141–145 (VVSGG), D174, G187, D191, and N280 contribute to the substrate site. Position 310 (D310) interacts with Fe cation.

The protein belongs to the KAE1 / TsaD family. It depends on Fe(2+) as a cofactor.

The protein localises to the cytoplasm. The catalysed reaction is L-threonylcarbamoyladenylate + adenosine(37) in tRNA = N(6)-L-threonylcarbamoyladenosine(37) in tRNA + AMP + H(+). Required for the formation of a threonylcarbamoyl group on adenosine at position 37 (t(6)A37) in tRNAs that read codons beginning with adenine. Is involved in the transfer of the threonylcarbamoyl moiety of threonylcarbamoyl-AMP (TC-AMP) to the N6 group of A37, together with TsaE and TsaB. TsaD likely plays a direct catalytic role in this reaction. The sequence is that of tRNA N6-adenosine threonylcarbamoyltransferase from Listeria welshimeri serovar 6b (strain ATCC 35897 / DSM 20650 / CCUG 15529 / CIP 8149 / NCTC 11857 / SLCC 5334 / V8).